A 229-amino-acid polypeptide reads, in one-letter code: Lytic polysaccharide monooxygenase-like protein ham-7 (229 aa).

The N-terminal stretch at 1–17 (MLTSTLLALASAALASA) is a signal peptide. Cu(2+) is bound at residue H18. 2 disulfide bridges follow: C47/C157 and C122/C178. N55, N98, N139, N174, and N180 each carry an N-linked (GlcNAc...) asparagine glycan. The GPI-anchor amidated serine moiety is linked to residue S206. A propeptide spans 207-229 (AAASLARMAGWVPLVAGGLWLML) (removed in mature form).

It belongs to the X325 family. Cu(2+) is required as a cofactor.

It is found in the cell membrane. In terms of biological role, lytic polysaccharide monooxygenase-like protein that has diverged to biological functions other than polysaccharide degradation since it does not perform oxidative cleavage of polysaccharides. Acts as the major cell wall sensor that regulates MAK-1-dependent hyphal anastomosis, the fusion of hyphal cells. May also act as a cell surface-bound protein that functions in the copper-accumulation pathway. The protein is Lytic polysaccharide monooxygenase-like protein ham-7 of Neurospora crassa (strain ATCC 24698 / 74-OR23-1A / CBS 708.71 / DSM 1257 / FGSC 987).